Reading from the N-terminus, the 678-residue chain is Serine/threonine-protein kinase mph1 (678 aa).

Disordered stretches follow at residues 39 to 93 (KNDT…NSAL) and 114 to 209 (LPST…SNSV). Composition is skewed to polar residues over residues 41–66 (DTFS…SSGA) and 114–125 (LPSTNASHSEVS). One can recognise a Protein kinase domain in the interval 316-607 (FIKLGVVGKG…LVHPFLNPLP (292 aa)). Residues 322-330 (VGKGGSSMV) and Lys-345 contribute to the ATP site. Asp-442 (proton acceptor) is an active-site residue.

It belongs to the protein kinase superfamily. Ser/Thr protein kinase family.

The enzyme catalyses L-seryl-[protein] + ATP = O-phospho-L-seryl-[protein] + ADP + H(+). It catalyses the reaction L-threonyl-[protein] + ATP = O-phospho-L-threonyl-[protein] + ADP + H(+). The catalysed reaction is L-tyrosyl-[protein] + ATP = O-phospho-L-tyrosyl-[protein] + ADP + H(+). Functionally, involved in mitotic spindle assembly checkpoint signaling, a process that delays anaphase until chromosomes are bioriented on the spindle, and in the repair of incorrect mitotic kinetochore-spindle microtubule attachments. Phosphorylates spc7/knl1 on MELT motifs; phosphorylation is required for recruitment of the BUB1-BUB3 complex to kinetochores. This is Serine/threonine-protein kinase mph1 from Schizosaccharomyces pombe (strain 972 / ATCC 24843) (Fission yeast).